Reading from the N-terminus, the 487-residue chain is MKPSTEWWRYLAPLAVIAIIALLPVPAGLENHTWLYFAVFTGVIVGLILEPVPGAVVAMVGISIIAILSPWLLFSPEQLAQPGFKFTAKSLSWAVSGFSNSVIWLIFAAFMFGTGYEKTGLGRRIALILVKKMGHRTLFLGYAVMFSELILAPVTPSNSARGAGIIYPIIRNLPPLYQSQPNDSSSRSIGSYIMWMGIVADCVTSAIFLTAMAPNLLLIGLMKSASHATLSWGDWFLGMLPLSILLVLLVPWLAYVLYPPVLKSGDQVPRWAETELQAMGPLCSREKRMLGLMVGALVLWIFGGDYIDAAMVGYSVVALMLLLRIISWDDIVSNKAAWNVFFWLASLITLATGLNNTGFISWFGKLLAGSLSGYSPTMVMVTLIVVFYLLRYFFASATAYTCALAPMMIAAALAMPEIPLPVFCLMVGAAIGLGSILTPYATGPSPIYYGSGYLPTADYWRLGAIFGLIFLVLLVITGLLWMPVVLL.

A run of 14 helical transmembrane segments spans residues 10 to 30 (YLAP…AGLE), 33 to 53 (TWLY…EPVP), 54 to 74 (GAVV…WLLF), 93 to 113 (WAVS…FMFG), 137 to 157 (TLFL…VTPS), 189 to 209 (IGSY…AIFL), 236 to 256 (FLGM…LAYV), 292 to 312 (LMVG…AAMV), 313 to 333 (GYSV…DIVS), 340 to 360 (VFFW…TGFI), 370 to 390 (SLSG…FYLL), 393 to 413 (FFAS…AAAL), 418 to 438 (IPLP…SILT), and 465 to 485 (IFGL…MPVV).

It belongs to the SLC13A/DASS transporter (TC 2.A.47) family. DIT1 subfamily.

The protein resides in the cell inner membrane. It catalyses the reaction (2R,3R)-tartrate(out) + succinate(in) = (2R,3R)-tartrate(in) + succinate(out). Its function is as follows. Catalyzes the uptake of tartrate in exchange for intracellular succinate. Essential for anaerobic L-tartrate fermentation. This chain is L-tartrate/succinate antiporter (ttdT), found in Shigella flexneri.